A 284-amino-acid polypeptide reads, in one-letter code: Protease HtpX (284 aa).

Helical transmembrane passes span 4–24 (ILLFLATNAAVLIVFNIILSL) and 33–53 (MGLLIMAALFGFTGSIISLLM). His-139 is a Zn(2+) binding site. Glu-140 is an active-site residue. Position 143 (His-143) interacts with Zn(2+). 2 helical membrane-spanning segments follow: residues 147–167 (GDMVTMTLLQGVLNTFVIFAA) and 187–207 (IYFLVAMVLEVVFGFLASMIA). Residue Glu-215 coordinates Zn(2+).

Belongs to the peptidase M48B family. The cofactor is Zn(2+).

Its subcellular location is the cell inner membrane. This is Protease HtpX from Mannheimia succiniciproducens (strain KCTC 0769BP / MBEL55E).